A 289-amino-acid polypeptide reads, in one-letter code: Protease HtpX homolog (289 aa).

The next 2 helical transmembrane spans lie at 8–28 (LALLAALSGLLIAISYWVIGG) and 29–49 (SSGLMIGIGLAAVTNLLSWYQ). Histidine 132 is a Zn(2+) binding site. Glutamate 133 is a catalytic residue. Residue histidine 136 participates in Zn(2+) binding. Transmembrane regions (helical) follow at residues 151-171 (VAGAISFLAQMVSYSLWFGGI) and 183-203 (LGVLLTVVLAPIAATIIQLAI). Glutamate 208 is a binding site for Zn(2+).

The protein belongs to the peptidase M48B family. Zn(2+) is required as a cofactor.

It is found in the cell inner membrane. The sequence is that of Protease HtpX homolog from Nostoc sp. (strain PCC 7120 / SAG 25.82 / UTEX 2576).